A 422-amino-acid polypeptide reads, in one-letter code: UDP-N-acetylglucosamine 1-carboxyvinyltransferase (422 aa).

24 to 25 lines the phosphoenolpyruvate pocket; that stretch reads KN. Arginine 93 is a UDP-N-acetyl-alpha-D-glucosamine binding site. The Proton donor role is filled by cysteine 117. Residue cysteine 117 is modified to 2-(S-cysteinyl)pyruvic acid O-phosphothioketal. Residues 122 to 126, 162 to 165, aspartate 307, and isoleucine 329 contribute to the UDP-N-acetyl-alpha-D-glucosamine site; these read RPVDL and KVSV.

It belongs to the EPSP synthase family. MurA subfamily.

The protein resides in the cytoplasm. It catalyses the reaction phosphoenolpyruvate + UDP-N-acetyl-alpha-D-glucosamine = UDP-N-acetyl-3-O-(1-carboxyvinyl)-alpha-D-glucosamine + phosphate. The protein operates within cell wall biogenesis; peptidoglycan biosynthesis. In terms of biological role, cell wall formation. Adds enolpyruvyl to UDP-N-acetylglucosamine. This is UDP-N-acetylglucosamine 1-carboxyvinyltransferase from Vibrio atlanticus (strain LGP32) (Vibrio splendidus (strain Mel32)).